The chain runs to 368 residues: Zinc finger protein 24 (368 aa).

Residue lysine 22 forms a Glycyl lysine isopeptide (Lys-Gly) (interchain with G-Cter in SUMO2) linkage. Residue lysine 27 forms a Glycyl lysine isopeptide (Lys-Gly) (interchain with G-Cter in SUMO1); alternate linkage. A Glycyl lysine isopeptide (Lys-Gly) (interchain with G-Cter in SUMO2); alternate cross-link involves residue lysine 27. An SCAN box domain is found at 52–134 (RQRFRQFGYQ…TVLEDLESEL (83 aa)). Serine 132 and serine 142 each carry phosphoserine. Residues lysine 147, lysine 177, and lysine 236 each participate in a glycyl lysine isopeptide (Lys-Gly) (interchain with G-Cter in SUMO2) cross-link. The segment at 251–273 (HICDECGKHFSQGSALILHQRIH) adopts a C2H2-type 1 zinc-finger fold. Positions 251–301 (HICDECGKHFSQGSALILHQRIHSGEKPYGCVECGKAFSRSSILVQHQRVH) are necessary and sufficient for nuclear localization. A Phosphoserine modification is found at serine 274. Glycyl lysine isopeptide (Lys-Gly) (interchain with G-Cter in SUMO2) cross-links involve residues lysine 277 and lysine 286. 3 C2H2-type zinc fingers span residues 279–301 (YGCV…QRVH), 307–329 (YKCL…QRIH), and 335–357 (YECV…XXRH). Serine 292 carries the phosphoserine modification. Tyrosine 335 carries the phosphotyrosine modification. Residues lysine 361 and lysine 367 each participate in a glycyl lysine isopeptide (Lys-Gly) (interchain with G-Cter in SUMO2) cross-link.

The protein belongs to the krueppel C2H2-type zinc-finger protein family. In terms of processing, sumoylated.

Its subcellular location is the nucleus. Its function is as follows. Transcription factor required for myelination of differentiated oligodendrocytes. Required for the conversion of oligodendrocytes from the premyelinating to the myelinating state. In the developing central nervous system (CNS), involved in the maintenance in the progenitor stage by promoting the cell cycle. Specifically binds to the 5'-TCAT-3' DNA sequence. Has transcription repressor activity in vitro. This is Zinc finger protein 24 (ZNF24) from Pan troglodytes (Chimpanzee).